A 378-amino-acid polypeptide reads, in one-letter code: Flagellar P-ring protein 2 (378 aa).

Residues 1–33 (MHEVSDKTNAIHPLQRVSRALFALGLLCFAAMA) form the signal peptide.

Belongs to the FlgI family. As to quaternary structure, the basal body constitutes a major portion of the flagellar organelle and consists of four rings (L,P,S, and M) mounted on a central rod.

The protein localises to the periplasm. The protein resides in the bacterial flagellum basal body. Its function is as follows. Assembles around the rod to form the L-ring and probably protects the motor/basal body from shearing forces during rotation. This Hahella chejuensis (strain KCTC 2396) protein is Flagellar P-ring protein 2.